The chain runs to 191 residues: UPF0312 protein Sden_2128 (191 aa).

The N-terminal stretch at 1–22 (MKKHLLASLLGASLLLPTAVNA) is a signal peptide.

This sequence belongs to the UPF0312 family. Type 1 subfamily.

The protein localises to the periplasm. This chain is UPF0312 protein Sden_2128, found in Shewanella denitrificans (strain OS217 / ATCC BAA-1090 / DSM 15013).